The primary structure comprises 166 residues: Small ribosomal subunit protein uS5 (166 aa).

Positions 11–74 constitute an S5 DRBM domain; that stretch reads LDDNVVAINR…EAAKKNLITV (64 aa).

Belongs to the universal ribosomal protein uS5 family. As to quaternary structure, part of the 30S ribosomal subunit. Contacts proteins S4 and S8.

Its function is as follows. With S4 and S12 plays an important role in translational accuracy. In terms of biological role, located at the back of the 30S subunit body where it stabilizes the conformation of the head with respect to the body. The protein is Small ribosomal subunit protein uS5 of Lactiplantibacillus plantarum (strain ATCC BAA-793 / NCIMB 8826 / WCFS1) (Lactobacillus plantarum).